The following is a 464-amino-acid chain: JmjC domain-containing protein 1 (464 aa).

The 168-residue stretch at 182–349 (LYAKDMHLFR…QMYTALKEQY (168 aa)) folds into the JmjC domain.

In Schizosaccharomyces pombe (strain 972 / ATCC 24843) (Fission yeast), this protein is JmjC domain-containing protein 1 (jmj1).